Here is a 595-residue protein sequence, read N- to C-terminus: Apolipoprotein N-acyltransferase 2 (595 aa).

5 helical membrane passes run 30-50 (FLAF…FGFF), 63-83 (LFFH…HWII), 95-115 (VVAI…FPIF), 167-187 (AEIT…YTLF), and 210-230 (FITL…FLFK). Residues 241-555 (LNVLIVQPDA…AEALSETIDV (315 aa)) form the CN hydrolase domain. The active-site Proton acceptor is the glutamate 293. Residue lysine 372 is part of the active site. Cysteine 463 (nucleophile) is an active-site residue. The chain crosses the membrane as a helical span at residues 569-589 (LIPWLMLFLTGIYYLNLLIGI).

Belongs to the CN hydrolase family. Apolipoprotein N-acyltransferase subfamily.

The protein localises to the cell inner membrane. The catalysed reaction is N-terminal S-1,2-diacyl-sn-glyceryl-L-cysteinyl-[lipoprotein] + a glycerophospholipid = N-acyl-S-1,2-diacyl-sn-glyceryl-L-cysteinyl-[lipoprotein] + a 2-acyl-sn-glycero-3-phospholipid + H(+). The protein operates within protein modification; lipoprotein biosynthesis (N-acyl transfer). In terms of biological role, catalyzes the phospholipid dependent N-acylation of the N-terminal cysteine of apolipoprotein, the last step in lipoprotein maturation. This chain is Apolipoprotein N-acyltransferase 2, found in Leptospira interrogans serogroup Icterohaemorrhagiae serovar copenhageni (strain Fiocruz L1-130).